The chain runs to 354 residues: Guanine nucleotide-binding protein alpha-2 subunit (354 aa).

The G-alpha domain maps to 33-354 (KIYKVLLLGA…QHSLKEAGMF (322 aa)). Positions 36–49 (KVLLLGASDSGKST) are G1 motif. Positions 44, 45, 46, 47, 48, 49, 148, 173, 179, 201, 269, 270, 272, and 326 each coordinate GTP. Residue Ser48 participates in Mg(2+) binding. A G2 motif region spans residues 171 to 179 (DILRSRNST). A Mg(2+)-binding site is contributed by Thr179. Residues 194–203 (IRMFDVGGQR) are G3 motif. The segment at 265 to 272 (ILFLNKFD) is G4 motif. A G5 motif region spans residues 324–329 (TTAVDT).

It belongs to the G-alpha family. In terms of assembly, g proteins are composed of 3 units; alpha, beta and gamma. Binding of the beta-gamma subunit complex (git5-git11) to the alpha subunit (gpa2) facilitates interaction with GPCR git3. Interacts with GPCR git3; the interaction is direct and leads to activation of gpa2 upon glucose stimulation. Interacts with adenylate cyclase cyr1 (via N-terminus); the interaction is direct and serves to activate adenylate cyclase and cAMP-PKA signaling, to repress sexual development and gluconeogenesis. The cofactor is Mg(2+).

It is found in the cell membrane. In terms of biological role, alpha subunit of the heterotrimeric guanine nucleotide-binding protein (G protein) involved in glucose-induced cAMP signaling. Binds to its cognate transmembrane receptor git3, which senses extracellular glucose, and activates cAMP-PKA signaling to repress sexual development and gluconeogenesis. This Schizosaccharomyces pombe (strain 972 / ATCC 24843) (Fission yeast) protein is Guanine nucleotide-binding protein alpha-2 subunit.